A 517-amino-acid chain; its full sequence is MSMNKGPTLLDGDLPEQENVLQRVLQLPVVSGTCECFQKTYNSTKEAHPLVASVCNAYEKGVQGASNLAAWSMEPVVRRLSTQFTAANELACRGLDHLEEKIPALQYPPEKIASELKGTISTRLRSARNSISVPIASTSDKVLGATLAGCELALGMAKETAEYAANTRVGRLASGGADLALGSIEKVVEYLLPPDKVESAPSSGRQKTQKAPKAKPSLLRRVSTLANTLSRHTMQTTARALKRGHSLAMWIPGVAPLSSLAQWGASAAMQVVSRRQSEVRVPWLHNLAASKDENHEDQTDTEGEETDEEEEEEESEAEENVLREVTALPTPLGFLGGVVHTVQKTLQNTISAVTWAPAAVLGTVGRILHLTPAQAVSSTKGRAMSLSDALKGVTDNVVDTVVHYVPLPRLSLMEPESEFQDIDNPPAEVERKGSGSRPASPESTARPGQPRAACAVRGLSAPSCPDLDDKTETSARPGLLAMPREKPARRVSDSFFRPSVMEPILGRTQYSQLRKKS.

At Ser81 the chain carries Phosphoserine. A Phosphothreonine modification is found at Thr85. Phosphoserine occurs at positions 126, 130, 132, 137, and 174. The segment at 197-217 (VESAPSSGRQKTQKAPKAKPS) is disordered. Thr224, Thr299, and Thr301 each carry phosphothreonine. Positions 285-321 (HNLAASKDENHEDQTDTEGEETDEEEEEEESEAEENV) are disordered. Residues 291 to 322 (KDENHEDQTDTEGEETDEEEEEEESEAEENVL) form a required for interaction with CIDEC region. The span at 299–319 (TDTEGEETDEEEEEEESEAEE) shows a compositional bias: acidic residues. Phosphoserine is present on residues Ser315, Ser385, Ser387, Pro408, Ser411, Ser434, Ser436, Ser440, Ser460, Ser492, and Ser494. The tract at residues 415–495 (PESEFQDIDN…KPARRVSDSF (81 aa)) is disordered. The span at 483–492 (PREKPARRVS) shows a compositional bias: basic and acidic residues.

This sequence belongs to the perilipin family. As to quaternary structure, interacts with ABHD5. Interacts with CIDEC. Interacts with AQP7. Post-translationally, major cAMP-dependent protein kinase substrate in adipocytes, also dephosphorylated by PP1. When phosphorylated, may be maximally sensitive to HSL. When unphosphorylated, may play a role in the inhibition of lipolysis, by acting as a barrier in lipid droplet. In terms of processing, the N-terminus is blocked. In terms of tissue distribution, adipocytes.

Its subcellular location is the endoplasmic reticulum. It is found in the lipid droplet. Modulator of adipocyte lipid metabolism. Coats lipid storage droplets to protect them from breakdown by hormone-sensitive lipase (HSL). Its absence may result in leanness. Plays a role in unilocular lipid droplet formation by activating CIDEC. Their interaction promotes lipid droplet enlargement and directional net neutral lipid transfer. May modulate lipolysis and triglyceride levels. The protein is Perilipin-1 (Plin1) of Rattus norvegicus (Rat).